A 370-amino-acid chain; its full sequence is 4-hydroxy-3-methylbut-2-en-1-yl diphosphate synthase (flavodoxin) (370 aa).

[4Fe-4S] cluster contacts are provided by Cys-270, Cys-273, Cys-305, and Glu-312.

Belongs to the IspG family. [4Fe-4S] cluster serves as cofactor.

It catalyses the reaction (2E)-4-hydroxy-3-methylbut-2-enyl diphosphate + oxidized [flavodoxin] + H2O + 2 H(+) = 2-C-methyl-D-erythritol 2,4-cyclic diphosphate + reduced [flavodoxin]. It participates in isoprenoid biosynthesis; isopentenyl diphosphate biosynthesis via DXP pathway; isopentenyl diphosphate from 1-deoxy-D-xylulose 5-phosphate: step 5/6. Its function is as follows. Converts 2C-methyl-D-erythritol 2,4-cyclodiphosphate (ME-2,4cPP) into 1-hydroxy-2-methyl-2-(E)-butenyl 4-diphosphate. The chain is 4-hydroxy-3-methylbut-2-en-1-yl diphosphate synthase (flavodoxin) from Hahella chejuensis (strain KCTC 2396).